We begin with the raw amino-acid sequence, 509 residues long: Sulfoacetate--CoA ligase (509 aa).

Residues 320–340 (AFSNPLDPGQRRIGSIGRPSG) are disordered.

It belongs to the ATP-dependent AMP-binding enzyme family.

The protein resides in the cytoplasm. The catalysed reaction is sulfoacetate + ATP + CoA = sulfoacetyl-CoA + AMP + diphosphate. Its function is as follows. Involved in the degradation of sulfoacetate, a widespread natural product. Catalyzes the CoA- and ATP-dependent conversion of sulfoacetate to sulfoacetyl-CoA and AMP. The chain is Sulfoacetate--CoA ligase from Cupriavidus necator (strain ATCC 17699 / DSM 428 / KCTC 22496 / NCIMB 10442 / H16 / Stanier 337) (Ralstonia eutropha).